The following is a 273-amino-acid chain: Cbp/p300-interacting transactivator 2 (273 aa).

The tract at residues 137–204 is disordered; it reads DLHPAAGHQM…GSGGSGSSNM (68 aa). The span at 165–200 shows a compositional bias: gly residues; that stretch reads STPGGSGGSSTPGGSGGSAGGGAGSSNSGGGSGGSG.

The protein belongs to the CITED family. In terms of assembly, interacts (via C-terminus) with SMAD2. Interacts (via C-terminus) with SMAD3 (via MH2 domain). Interacts with LHX2 (via LIM domains). Interacts with WT1. Interacts (via C-terminus) with EP300 (via CH1 domain); the interaction is stimulated in response to hypoxia. Interacts with PPARA. Interacts (via C-terminus) with TFAP2A, TFAP2B and TFAP2C.

The protein resides in the nucleus. Functionally, transcriptional coactivator of the p300/CBP-mediated transcription complex. Acts as a bridge, linking TFAP2 transcription factors and the p300/CBP transcriptional coactivator complex in order to stimulate TFAP2-mediated transcriptional activation. Positively regulates TGF-beta signaling through its association with the SMAD/p300/CBP-mediated transcriptional coactivator complex. Stimulates the peroxisome proliferator-activated receptors PPARA transcriptional activity. Enhances estrogen-dependent transactivation mediated by estrogen receptors. Also acts as a transcriptional corepressor; interferes with the binding of the transcription factors HIF1A or STAT2 and the p300/CBP transcriptional coactivator complex. Participates in sex determination and early gonad development by stimulating transcription activation of SRY. Plays a role in controlling left-right patterning during embryogenesis; potentiates transcriptional activation of NODAL-mediated gene transcription in the left lateral plate mesoderm (LPM). Plays an essential role in differentiation of the adrenal cortex from the adrenogonadal primordium (AGP); stimulates WT1-mediated transcription activation thereby up-regulating the nuclear hormone receptor NR5A1 promoter activity. Associates with chromatin to the PITX2 P1 promoter region. This is Cbp/p300-interacting transactivator 2 (CITED2) from Saguinus labiatus (Red-chested mustached tamarin).